The sequence spans 350 residues: B1 bradykinin receptor (350 aa).

Residues M1–S41 lie on the Extracellular side of the membrane. N-linked (GlcNAc...) asparagine glycans are attached at residues N13 and N21. A helical membrane pass occupies residues V42 to L62. Residues R63–E72 are Cytoplasmic-facing. A helical membrane pass occupies residues M73–A93. At A94–R110 the chain is on the extracellular side. N-linked (GlcNAc...) asparagine glycosylation occurs at N95. C109 and C186 are oxidised to a cystine. The helical transmembrane segment at L111–S131 threads the bilayer. Over R132 to A150 the chain is Cytoplasmic. A helical transmembrane segment spans residues R151–F171. Residues R172–N204 are Extracellular-facing. N-linked (GlcNAc...) asparagine glycosylation is present at N182. A helical transmembrane segment spans residues V205 to S225. Residues L226–L248 are Cytoplasmic-facing. The chain crosses the membrane as a helical span at residues I249–L269. The Extracellular segment spans residues E270–Q292. The helical transmembrane segment at Y293–G313 threads the bilayer. At R314–N350 the chain is on the cytoplasmic side. C327 is lipidated: S-palmitoyl cysteine.

It belongs to the G-protein coupled receptor 1 family. Bradykinin receptor subfamily. BDKRB1 sub-subfamily.

Its subcellular location is the cell membrane. Functionally, this is a receptor for bradykinin. Could be a factor in chronic pain and inflammation. This Canis lupus familiaris (Dog) protein is B1 bradykinin receptor (BDKRB1).